Reading from the N-terminus, the 176-residue chain is Neuroblastoma suppressor of tumorigenicity 1 (176 aa).

The signal sequence occupies residues 1 to 17 (MTVWLLIGFLLPVAIFA). Intrachain disulfides connect cysteine 34/cysteine 84, cysteine 48/cysteine 98, cysteine 58/cysteine 117, cysteine 62/cysteine 119, and cysteine 81/cysteine 122. The CTCK domain occupies 34 to 123 (CEAKNITQIV…ILQCSCQACG (90 aa)). Positions 148 to 176 (ETLGHHHHRPPAREEDSPAQSQREGESEE) are disordered.

Belongs to the DAN family. In terms of assembly, interacts with bmp2; the interaction is blocked in presence of nog.

It is found in the secreted. Its function is as follows. May act as a tumor suppressor. Cytokine that has an axial patterning activity. Acts like bone morpho-genetic protein (BMP) antagonist in embryonic explants. Blocks the bmp2 activity. In Xenopus tropicalis (Western clawed frog), this protein is Neuroblastoma suppressor of tumorigenicity 1 (nbl1).